Reading from the N-terminus, the 247-residue chain is tRNA (guanine-N(1)-)-methyltransferase (247 aa).

S-adenosyl-L-methionine is bound at residue Gly126.

Belongs to the RNA methyltransferase TrmD family. As to quaternary structure, homodimer.

The protein localises to the cytoplasm. The enzyme catalyses guanosine(37) in tRNA + S-adenosyl-L-methionine = N(1)-methylguanosine(37) in tRNA + S-adenosyl-L-homocysteine + H(+). Specifically methylates guanosine-37 in various tRNAs. This chain is tRNA (guanine-N(1)-)-methyltransferase, found in Jannaschia sp. (strain CCS1).